The chain runs to 427 residues: Glutamate-1-semialdehyde 2,1-aminomutase (427 aa).

Lys-265 carries the post-translational modification N6-(pyridoxal phosphate)lysine.

The protein belongs to the class-III pyridoxal-phosphate-dependent aminotransferase family. HemL subfamily. As to quaternary structure, homodimer. It depends on pyridoxal 5'-phosphate as a cofactor.

Its subcellular location is the cytoplasm. It carries out the reaction (S)-4-amino-5-oxopentanoate = 5-aminolevulinate. It participates in porphyrin-containing compound metabolism; protoporphyrin-IX biosynthesis; 5-aminolevulinate from L-glutamyl-tRNA(Glu): step 2/2. The chain is Glutamate-1-semialdehyde 2,1-aminomutase from Neisseria meningitidis serogroup A / serotype 4A (strain DSM 15465 / Z2491).